Consider the following 126-residue polypeptide: Holo-[acyl-carrier-protein] synthase (126 aa).

Mg(2+) contacts are provided by Asp9 and Glu58.

Belongs to the P-Pant transferase superfamily. AcpS family. Requires Mg(2+) as cofactor.

Its subcellular location is the cytoplasm. The enzyme catalyses apo-[ACP] + CoA = holo-[ACP] + adenosine 3',5'-bisphosphate + H(+). Transfers the 4'-phosphopantetheine moiety from coenzyme A to a Ser of acyl-carrier-protein. The protein is Holo-[acyl-carrier-protein] synthase of Photobacterium profundum (strain SS9).